We begin with the raw amino-acid sequence, 226 residues long: NifU-like protein 1, chloroplastic (226 aa).

The N-terminal 76 residues, 1–76, are a transit peptide targeting the chloroplast; it reads MQTTTVPMAA…PVTAVQLPLT (76 aa).

It belongs to the NifU family. As to quaternary structure, homodimer; disulfide-linked.

Its subcellular location is the plastid. The protein localises to the chloroplast stroma. Its function is as follows. Molecular scaffold for [Fe-S] cluster assembly of chloroplastic iron-sulfur proteins. This is NifU-like protein 1, chloroplastic (NIFU1) from Oryza sativa subsp. japonica (Rice).